Here is a 190-residue protein sequence, read N- to C-terminus: Imidazoleglycerol-phosphate dehydratase (190 aa).

It belongs to the imidazoleglycerol-phosphate dehydratase family.

It localises to the cytoplasm. The enzyme catalyses D-erythro-1-(imidazol-4-yl)glycerol 3-phosphate = 3-(imidazol-4-yl)-2-oxopropyl phosphate + H2O. The protein operates within amino-acid biosynthesis; L-histidine biosynthesis; L-histidine from 5-phospho-alpha-D-ribose 1-diphosphate: step 6/9. This is Imidazoleglycerol-phosphate dehydratase from Wolinella succinogenes (strain ATCC 29543 / DSM 1740 / CCUG 13145 / JCM 31913 / LMG 7466 / NCTC 11488 / FDC 602W) (Vibrio succinogenes).